A 132-amino-acid polypeptide reads, in one-letter code: Fatty acid-binding protein (132 aa).

Residues R107 and 127–129 (RNY) contribute to the (5Z,8Z,11Z,14Z)-eicosatetraenoate site. Residues R107 and 127-129 (RNY) each bind (9Z)-octadecenoate.

It belongs to the calycin superfamily. Fatty-acid binding protein (FABP) family.

The protein localises to the cytoplasm. Functionally, may play a role in the transport of fatty acids. Binds to various fatty acids but not retinoids. The protein is Fatty acid-binding protein of Schistosoma japonicum (Blood fluke).